The following is a 225-amino-acid chain: Elongation factor 1-beta (225 aa).

The GST C-terminal domain occupies 2–84 (GFGDLKSPAG…ALGTYGPADV (83 aa)). K7 carries the N6-acetyllysine modification. Residues S8 and S42 each carry the phosphoserine modification. The tract at residues 80-114 (GPADVEDTTGSGATDSKDDDDIDLFGSDDEEESEE) is disordered. 2 positions are modified to phosphothreonine: T88 and T93. Phosphoserine is present on S95. The span at 96–113 (KDDDDIDLFGSDDEEESE) shows a compositional bias: acidic residues. Position 106 is a phosphoserine; by CK2 (S106). K147 participates in a covalent cross-link: Glycyl lysine isopeptide (Lys-Gly) (interchain with G-Cter in SUMO2). Residue S174 is modified to Phosphoserine.

It belongs to the EF-1-beta/EF-1-delta family. EF-1 is composed of 4 subunits: alpha, beta (alpha subunit of the eEF1B subcomplex), delta (beta subunit of the eEF1B subcomplex), and gamma (gamma subunit of the eEF1B subcomplex). Interacts with elongation factor EEF1A1. Phosphorylation affects the GDP/GTP exchange rate.

Functionally, catalytic subunit of the guanine nucleotide exchange factor (GEF) (eEF1B subcomplex) of the eukaryotic elongation factor 1 complex (eEF1). Stimulates the exchange of GDP for GTP on elongation factor 1A (eEF1A), probably by displacing GDP from the nucleotide binding pocket in eEF1A. The protein is Elongation factor 1-beta (EEF1B) of Oryctolagus cuniculus (Rabbit).